Reading from the N-terminus, the 834-residue chain is Periplasmic nitrate reductase (834 aa).

The segment at residues 1-29 (MNLTRREFAKANAAAIAAAAAGLPILVRA) is a signal peptide (tat-type signal). Residues 41–97 (LVWNKAPCRFCGTGCSVMVATRDGQVVATHGDIKAEVNRGINCVKGYFLSKIMYGSD) form the 4Fe-4S Mo/W bis-MGD-type domain. Positions 48, 51, 55, and 83 each coordinate [4Fe-4S] cluster. Residues Lys85, Gln152, Asn177, Cys181, 214–221 (WGSNMAEM), 245–249 (STFEH), 264–266 (QTD), Met375, Gln379, Asn485, 511–512 (SD), Lys534, Asp561, and 721–730 (TGRVLEHWHT) each bind Mo-bis(molybdopterin guanine dinucleotide). Position 797 (Phe797) interacts with substrate. Mo-bis(molybdopterin guanine dinucleotide) contacts are provided by Asn805 and Lys822.

The protein belongs to the prokaryotic molybdopterin-containing oxidoreductase family. NasA/NapA/NarB subfamily. Component of the periplasmic nitrate reductase NapAB complex composed of NapA and NapB. The cofactor is [4Fe-4S] cluster. Mo-bis(molybdopterin guanine dinucleotide) serves as cofactor. Post-translationally, predicted to be exported by the Tat system. The position of the signal peptide cleavage has not been experimentally proven.

Its subcellular location is the periplasm. The enzyme catalyses 2 Fe(II)-[cytochrome] + nitrate + 2 H(+) = 2 Fe(III)-[cytochrome] + nitrite + H2O. In terms of biological role, catalytic subunit of the periplasmic nitrate reductase complex NapAB. Receives electrons from NapB and catalyzes the reduction of nitrate to nitrite. This is Periplasmic nitrate reductase from Pseudomonas aeruginosa (strain LESB58).